The following is a 72-amino-acid chain: Cell division protein ZapB (72 aa).

The stretch at 2–72 (SLEILDQLEG…RSLLGQIDNV (71 aa)) forms a coiled coil. The disordered stretch occupies residues 34–57 (NQQAQQANDELRSENEQLKGEHNN). The span at 42 to 57 (DELRSENEQLKGEHNN) shows a compositional bias: basic and acidic residues.

The protein belongs to the ZapB family. As to quaternary structure, homodimer. The ends of the coiled-coil dimer bind to each other, forming polymers. Interacts with FtsZ.

It is found in the cytoplasm. Non-essential, abundant cell division factor that is required for proper Z-ring formation. It is recruited early to the divisome by direct interaction with FtsZ, stimulating Z-ring assembly and thereby promoting cell division earlier in the cell cycle. Its recruitment to the Z-ring requires functional FtsA or ZipA. This Mannheimia succiniciproducens (strain KCTC 0769BP / MBEL55E) protein is Cell division protein ZapB.